A 393-amino-acid polypeptide reads, in one-letter code: Rhizopuspepsin (393 aa).

The first 21 residues, 1–21 (MKFTLISSCIAIAALAVAVDA), serve as a signal peptide directing secretion. The propeptide at 22–68 (APGEKKISIPLAKNPNYKPSAKNAIQKAIAKYNKHKINTSTGGIVPD) is activation peptide. The 305-residue stretch at 85–389 (YYGQVTIGTP…NQGVPEVQIA (305 aa)) folds into the Peptidase A1 domain. D103 is an active-site residue. C116 and C119 form a disulfide bridge. The active site involves D286. The cysteines at positions 320 and 353 are disulfide-linked.

Belongs to the peptidase A1 family.

The catalysed reaction is Hydrolysis of proteins with broad specificity similar to that of pepsin A, preferring hydrophobic residues at P1 and P1'. Clots milk and activates trypsinogen. Does not cleave 4-Gln-|-His-5, but does cleave 10-His-|-Leu-11 and 12-Val-|-Glu-13 in B chain of insulin.. In Rhizopus chinensis (Bread mold), this protein is Rhizopuspepsin.